Reading from the N-terminus, the 940-residue chain is MGSGPIDPKELLKGLDSFLNRDGEVKSVDGISKIFSLMKEARKMVSRCTYLNILLQTRSPEILIKFIDVGGYKLLNNWLTYSKTTNNIPLLQQILLTLQHLPLTVDHLKQNNTAKLVKQLSKSSEDEELRKLASVLVSDWMAVIRSQSSTQPAEKDKKKRKDEGKSRTTPPERPLTEVKAETRAEEAPEKKREKPKSLRTTAPSHAKFRSTGLELETPSLVPVKKNASTVVVSDKYNLKPIPLKRQSNVAAPGDATPPAEKKYKPLNTTPNATKEIKVKIIPPQPMEGLGFLDALNSAPVPGIKIKKKKKVLSPTAAKPSPFEGKTSTEPSTAKPSSPEPAPPSEAMDIDRPGTPVPPVEVPELMDTASLEPGALDAKPVESPGDPNQLTRKGRKRKSVTWPEEGKLREYFYFELDETERVNVNKIKDFGEAAKREILSDRHAFETARRLSHDNMEEKVPWVCPRPLVLPSPLVTPGSNSQERYIQAEREKGILQELFLNKESPHEPDPEPYEPIPPKLIPLDEECSMDETPYVETLEPGGSGGSPDGAGGSKLPPVLANLMGSMGAGKGPQGPGGGGINVQEILTSIMGSPNSHPSEELLKQPDYSDKIKQMLVPHGLLGPGPIANGFPPGGPGGPKGMQHFPPGPGGPMPGPHGGPGGPVGPRLLGPPPPPRGGDPFWDGPGDPMRGGPMRGGPGPGPGPYHRGRGGRGGNEPPPPPPPPFRGARGGRSGGGPPNGRGGPGGGMVGGGGHRPHEGPGGGMGNSSGHRPHEGPGSGMGSGHRPHEGPGSSMGGGGGHRPHEGPGGGISGGSGHRPHEGPGGGMGAGGGHRPHEGPGGSMGGSGGHRPHEGPGHGGPHGHRPHDVPGHRGHDHRGPPHEHRGHDGPGHGGGGHRGHDGGHSHGGDMSNRPVCRHFMMKGNCRYENNCAFYHPGVNGPPLP.

The interaction with TOX4 stretch occupies residues 1 to 348; that stretch reads MGSGPIDPKE…EPAPPSEAMD (348 aa). Residues 73–147 form the TFIIS N-terminal domain; that stretch reads KLLNNWLTYS…SDWMAVIRSQ (75 aa). Disordered regions lie at residues 147-211, 247-270, 304-400, and 533-905; these read QSST…FRST, SNVAAPGDATPPAEKKYKPLNTTP, KIKK…KSVT, and YVET…HGGD. Basic and acidic residues-rich tracts occupy residues 153–166 and 174–196; these read AEKDKKKRKDEGKS and PLTEVKAETRAEEAPEKKREKPK. Lys-179 is covalently cross-linked (Glycyl lysine isopeptide (Lys-Gly) (interchain with G-Cter in SUMO2)). A Phosphothreonine modification is found at Thr-256. Residue Lys-262 forms a Glycyl lysine isopeptide (Lys-Gly) (interchain with G-Cter in SUMO2) linkage. Residue Ser-313 is modified to Phosphoserine. Over residues 325-336 the composition is skewed to low complexity; the sequence is KTSTEPSTAKPS. Positions 357–433 are necessary for interaction with PPP1CA; it reads PPVEVPELMD…NKIKDFGEAA (77 aa). Ser-382 carries the phosphoserine modification. The interval 393 to 408 is necessary for interaction with PPP1CC; the sequence is GRKRKSVTWPEEGKLR. The PP1-binding motif signature appears at 394–423; sequence RKRKSVTWPEEGKLREYFYFELDETERVNV. At Ser-398 the chain carries Phosphoserine; by PKA. The segment at 418 to 619 is interaction with WDR82; the sequence is TERVNVNKIK…IKQMLVPHGL (202 aa). Composition is skewed to gly residues over residues 540–551 and 565–579; these read GGSGGSPDGAGG and MGAGKGPQGPGGGGI. Ser-545 is modified (phosphoserine). Residues 583–595 are compositionally biased toward polar residues; that stretch reads EILTSIMGSPNSH. Ser-591 carries the post-translational modification Phosphoserine. Residues 596-611 are compositionally biased toward basic and acidic residues; that stretch reads PSEELLKQPDYSDKIK. Residues 644–655 are compositionally biased toward pro residues; it reads PPGPGGPMPGPH. Arg-665 is subject to Omega-N-methylarginine. Positions 676–690 are enriched in low complexity; that stretch reads GDPFWDGPGDPMRGG. Arg-693 is subject to Omega-N-methylarginine. The segment covering 714 to 723 has biased composition (pro residues); sequence EPPPPPPPPF. Composition is skewed to gly residues over residues 726–764 and 790–845; these read ARGGRSGGGPPNGRGGPGGGMVGGGGHRPHEGPGGGMGN and SSMG…GSGG. Arg-739 bears the Omega-N-methylarginine mark. 2 stretches are compositionally biased toward basic and acidic residues: residues 862-886 and 894-903; these read PHDVPGHRGHDHRGPPHEHRGHDGP and RGHDGGHSHG. Residues 906-934 form a C3H1-type zinc finger; the sequence is MSNRPVCRHFMMKGNCRYENNCAFYHPGV.

As to quaternary structure, component of the PNUTS-PP1 complex (also named PTW/PP1 complex), composed of PPP1R10/PNUTS, TOX4, WDR82, and PPP1CA (or PPP1CB or PPP1CC). Post-translationally, phosphorylated on Ser-398 by PKA within the region necessary for interaction with PPP1CA.

Its subcellular location is the nucleus. The protein resides in the chromosome. In terms of biological role, substrate-recognition component of the PNUTS-PP1 protein phosphatase complex, a protein phosphatase 1 (PP1) complex that promotes RNA polymerase II transcription pause-release, allowing transcription elongation. Promoter-proximal pausing by RNA polymerase II is a transcription halt following transcription initiation but prior to elongation, which acts as a checkpoint to control that transcripts are favorably configured for transcriptional elongation. The PNUTS-PP1 complex mediates the release of RNA polymerase II from promoter-proximal region of genes by catalyzing dephosphorylation of proteins involved in transcription, such as AFF4, CDK9, MEPCE, INTS12, NCBP1, POLR2M/GDOWN1 and SUPT6H. The PNUTS-PP1 complex also regulates RNA polymerase II transcription termination by mediating dephosphorylation of SUPT5H in termination zones downstream of poly(A) sites, thereby promoting deceleration of RNA polymerase II transcription. PNUTS-PP1 complex is also involved in the response to replication stress by mediating dephosphorylation of POLR2A at 'Ser-5' of the CTD, promoting RNA polymerase II degradation. The PNUTS-PP1 complex also plays a role in the control of chromatin structure and cell cycle progression during the transition from mitosis into interphase. PNUTS-PP1 complex mediates dephosphorylation of MYC, promoting MYC stability by preventing MYC ubiquitination by the SCF(FBXW7) complex. In addition to acts as a substrate-recognition component, PPP1R10/PNUTS also acts as a nuclear targeting subunit for the PNUTS-PP1 complex. In some context, PPP1R10/PNUTS also acts as an inhibitor of protein phosphatase 1 (PP1) activity by preventing access to substrates, such as RB. The polypeptide is Serine/threonine-protein phosphatase 1 regulatory subunit 10 (PPP1R10) (Macaca mulatta (Rhesus macaque)).